A 388-amino-acid polypeptide reads, in one-letter code: MKWLLLLGLVALSECIMYKVPLIRKKSLRRTLSERGLLKDFLKKHNLNPARKYFPQWEAPTLVDEQPLENYLDMEYFGTIGIGTPAQDFTVVFDTGSSNLWVPSVYCSSLACTNHNRFNPEDSSTYQSTSETVSITYGTGSMTGILGYDTVQVGGISDTNQIFGLSETEPGSFLYYAPFDGILGLAYPSISSSGATPVFDNIWNQGLVSQDLFSVYLSADDKSGSVVIFGGIDSSYYTGSLNWVPVTVEGYWQITVDSITMNGETIACAEGCQAIVDTGTSLLTGPTSPIANIQSDIGASENSDGDMVVSCSAISSLPDIVFTINGVQYPVPPSAYILQSEGSCISGFQGMNVPTESGELWILGDVFIRQYFTVFDRANNQVGLAPVA.

The first 15 residues, 1 to 15, serve as a signal peptide directing secretion; sequence MKWLLLLGLVALSEC. Positions 16-62 are cleaved as a propeptide — activation peptide; it reads IMYKVPLIRKKSLRRTLSERGLLKDFLKKHNLNPARKYFPQWEAPTL. Residues 76-385 enclose the Peptidase A1 domain; sequence YFGTIGIGTP…DRANNQVGLA (310 aa). Aspartate 94 is an active-site residue. The cysteines at positions 107 and 112 are disulfide-linked. At serine 130 the chain carries Phosphoserine. The cysteines at positions 268 and 272 are disulfide-linked. Residue aspartate 277 is part of the active site. An intrachain disulfide couples cysteine 311 to cysteine 344.

This sequence belongs to the peptidase A1 family.

The protein localises to the secreted. It carries out the reaction Preferential cleavage: hydrophobic, preferably aromatic, residues in P1 and P1' positions. Cleaves 1-Phe-|-Val-2, 4-Gln-|-His-5, 13-Glu-|-Ala-14, 14-Ala-|-Leu-15, 15-Leu-|-Tyr-16, 16-Tyr-|-Leu-17, 23-Gly-|-Phe-24, 24-Phe-|-Phe-25 and 25-Phe-|-Tyr-26 bonds in the B chain of insulin.. Its function is as follows. Shows particularly broad specificity; although bonds involving phenylalanine and leucine are preferred, many others are also cleaved to some extent. This chain is Pepsin A-5 (PGA5), found in Homo sapiens (Human).